Reading from the N-terminus, the 42-residue chain is Photosystem I reaction center subunit IX (42 aa).

Residues Y8–I28 traverse the membrane as a helical segment.

Belongs to the PsaJ family.

Its subcellular location is the plastid. The protein localises to the chloroplast thylakoid membrane. Functionally, may help in the organization of the PsaE and PsaF subunits. The protein is Photosystem I reaction center subunit IX of Pyropia yezoensis (Susabi-nori).